The sequence spans 196 residues: Dephospho-CoA kinase (196 aa).

The region spanning 6–196 (AIALTGGIGT…QVERFLKTLL (191 aa)) is the DPCK domain. 14–19 (GTGKST) contacts ATP.

This sequence belongs to the CoaE family.

Its subcellular location is the cytoplasm. The enzyme catalyses 3'-dephospho-CoA + ATP = ADP + CoA + H(+). The protein operates within cofactor biosynthesis; coenzyme A biosynthesis; CoA from (R)-pantothenate: step 5/5. Catalyzes the phosphorylation of the 3'-hydroxyl group of dephosphocoenzyme A to form coenzyme A. This chain is Dephospho-CoA kinase, found in Helicobacter pylori (strain J99 / ATCC 700824) (Campylobacter pylori J99).